The following is a 179-amino-acid chain: FADH(2)-dependent resorcinol hydroxylase, reductase component (179 aa).

This sequence belongs to the non-flavoprotein flavin reductase family. As to quaternary structure, the FADH(2)-dependent resorcinol hydroxylase is composed of two subunits, GraA (the oxygenase component) and GraD (the reductase component). Both subunits are required for activity.

The enzyme catalyses FADH2 + NAD(+) = FAD + NADH + 2 H(+). The protein operates within aromatic compound metabolism. Involved in the gamma-resorcylate (2,6-dihydroxybenzoate) catabolism. Reductase component of the resorcinol hydroxylase, which catalyzes the FADPH-dependent conversion of resorcinol to hydroxyquinol. Catalyzes the reduction of FAD by NADH. The reduced flavin is then transferred to the oxygenase component GraA. This is FADH(2)-dependent resorcinol hydroxylase, reductase component from Rhizobium sp. (strain MTP-10005).